The following is a 77-amino-acid chain: MAKFATQLLLFVLIASLVMLEVHASNTFQVPDLGKRLLMNRDPNGFPCAESCVYIPCTVTALLGCSCRNRVCYRNEL.

A signal peptide spans 1–24 (MAKFATQLLLFVLIASLVMLEVHA). Positions 25-44 (SNTFQVPDLGKRLLMNRDPN) are cleaved as a propeptide — removed in mature form. Residues 45–75 (GFPCAESCVYIPCTVTALLGCSCRNRVCYRN) constitute a cross-link (cyclopeptide (Gly-Asn)). Cystine bridges form between cysteine 48–cysteine 65, cysteine 52–cysteine 67, and cysteine 57–cysteine 72. A propeptide spans 76–77 (EL) (removed in mature form).

This is a cyclic peptide. In terms of tissue distribution, expressed in fruit and pedicel but not in root, leaf and stem (at protein level).

Functionally, probably participates in a plant defense mechanism. The polypeptide is Chassatide C13 (Chassalia chartacea (Chassalia curviflora)).